A 110-amino-acid polypeptide reads, in one-letter code: Lichenan-specific phosphotransferase enzyme IIA component (110 aa).

In terms of domain architecture, PTS EIIA type-3 spans 3–101; it reads EEMEQIIFQI…AAEIIELYEK (99 aa). The Tele-phosphohistidine intermediate; by HPr role is filled by histidine 77.

The protein resides in the cytoplasm. Its function is as follows. The phosphoenolpyruvate-dependent sugar phosphotransferase system (PTS), a major carbohydrate active -transport system, catalyzes the phosphorylation of incoming sugar substrates concomitant with their translocation across the cell membrane. This system is involved in lichenan transport. The chain is Lichenan-specific phosphotransferase enzyme IIA component (licA) from Bacillus subtilis (strain 168).